Here is a 345-residue protein sequence, read N- to C-terminus: L-threonine 3-dehydrogenase (345 aa).

Cysteine 39 contributes to the Zn(2+) binding site. Catalysis depends on charge relay system residues threonine 41 and histidine 44. Positions 64, 65, 94, 97, 100, and 108 each coordinate Zn(2+). NAD(+)-binding positions include isoleucine 176, aspartate 196, arginine 201, 263–265 (LGI), and 287–288 (VY).

It belongs to the zinc-containing alcohol dehydrogenase family. As to quaternary structure, homotetramer. It depends on Zn(2+) as a cofactor.

It is found in the cytoplasm. The enzyme catalyses L-threonine + NAD(+) = (2S)-2-amino-3-oxobutanoate + NADH + H(+). The protein operates within amino-acid degradation; L-threonine degradation via oxydo-reductase pathway; glycine from L-threonine: step 1/2. In terms of biological role, catalyzes the NAD(+)-dependent oxidation of L-threonine to 2-amino-3-ketobutyrate. The protein is L-threonine 3-dehydrogenase of Anaeromyxobacter dehalogenans (strain 2CP-1 / ATCC BAA-258).